The primary structure comprises 257 residues: Aspartate/glutamate leucyltransferase (257 aa).

It belongs to the R-transferase family. Bpt subfamily.

The protein localises to the cytoplasm. The catalysed reaction is N-terminal L-glutamyl-[protein] + L-leucyl-tRNA(Leu) = N-terminal L-leucyl-L-glutamyl-[protein] + tRNA(Leu) + H(+). It catalyses the reaction N-terminal L-aspartyl-[protein] + L-leucyl-tRNA(Leu) = N-terminal L-leucyl-L-aspartyl-[protein] + tRNA(Leu) + H(+). Functionally, functions in the N-end rule pathway of protein degradation where it conjugates Leu from its aminoacyl-tRNA to the N-termini of proteins containing an N-terminal aspartate or glutamate. The polypeptide is Aspartate/glutamate leucyltransferase (Leptospira interrogans serogroup Icterohaemorrhagiae serovar copenhageni (strain Fiocruz L1-130)).